The primary structure comprises 160 residues: uncharacterized protein (160 aa).

Basic and acidic residues predominate over residues 1–31 (METEKPNTDVKVAQDLEKLKLDEKHKDEKKD). Residues 1 to 160 (METEKPNTDV…DKKDKEHKKE (160 aa)) form a disordered region. A coiled-coil region spans residues 20–111 (KLDEKHKDEK…KSKLEGKKDK (92 aa)). Basic residues predominate over residues 32 to 42 (KKDKKDKKDKK). The span at 43–160 (DKKEKTPEEI…DKKDKEHKKE (118 aa)) shows a compositional bias: basic and acidic residues.

This is an uncharacterized protein from Dictyostelium discoideum (Social amoeba).